The chain runs to 452 residues: Protein CLT3, chloroplastic (452 aa).

Residues 1–34 constitute a chloroplast transit peptide; sequence MATTSRRFTTGLFASITSVKSHSANRPQSISLIR. A run of 10 helical transmembrane segments spans residues 105–125, 137–157, 175–195, 202–222, 230–250, 258–278, 307–327, 353–373, 389–409, and 412–432; these read AEIV…RVMY, FFLA…ILYF, PFLI…AAAA, TTVL…IFLG, ILGC…GSGA, GVLW…GTVL, FQAI…GIPF, GAPF…IALL, TVSV…LGVA, and LPKG…LYSW.

This sequence belongs to the CRT-like transporter family.

The protein resides in the plastid. Its subcellular location is the chloroplast membrane. In terms of biological role, involved in thiol transport from the plastid to the cytosol. Transports probably both glutathione (GSH) and its precursor, gamma-glutamylcysteine (gamma-EC). Exhibits some functional redundancy with CLT1 in maintaining the root GSH pool. In Arabidopsis thaliana (Mouse-ear cress), this protein is Protein CLT3, chloroplastic.